We begin with the raw amino-acid sequence, 226 residues long: ATP-dependent dethiobiotin synthetase BioD (226 aa).

12-17 (GIGKTV) is an ATP binding site. Threonine 16 is a binding site for Mg(2+). Residue lysine 37 is part of the active site. Threonine 41 contacts substrate. ATP is bound by residues aspartate 49, 108-111 (EGAG), and 197-199 (PAG). Mg(2+)-binding residues include aspartate 49 and glutamate 108.

The protein belongs to the dethiobiotin synthetase family. Homodimer. The cofactor is Mg(2+).

The protein resides in the cytoplasm. It carries out the reaction (7R,8S)-7,8-diammoniononanoate + CO2 + ATP = (4R,5S)-dethiobiotin + ADP + phosphate + 3 H(+). It participates in cofactor biosynthesis; biotin biosynthesis; biotin from 7,8-diaminononanoate: step 1/2. Its function is as follows. Catalyzes a mechanistically unusual reaction, the ATP-dependent insertion of CO2 between the N7 and N8 nitrogen atoms of 7,8-diaminopelargonic acid (DAPA, also called 7,8-diammoniononanoate) to form a ureido ring. The sequence is that of ATP-dependent dethiobiotin synthetase BioD from Mycolicibacterium vanbaalenii (strain DSM 7251 / JCM 13017 / BCRC 16820 / KCTC 9966 / NRRL B-24157 / PYR-1) (Mycobacterium vanbaalenii).